The primary structure comprises 156 residues: Small ribosomal subunit protein uS7 (156 aa).

It belongs to the universal ribosomal protein uS7 family. Part of the 30S ribosomal subunit. Contacts proteins S9 and S11.

Its function is as follows. One of the primary rRNA binding proteins, it binds directly to 16S rRNA where it nucleates assembly of the head domain of the 30S subunit. Is located at the subunit interface close to the decoding center, probably blocks exit of the E-site tRNA. This chain is Small ribosomal subunit protein uS7, found in Campylobacter concisus (strain 13826).